A 545-amino-acid polypeptide reads, in one-letter code: Calcium-dependent protein kinase 10 (545 aa).

The segment at 1–36 (MGNCNACVRPDSKESKPSSKPKKPNRDRKLNPFAGD) is disordered. The N-myristoyl glycine moiety is linked to residue G2. A Protein kinase domain is found at 63–321 (YILGRELGRG…AQQVLAHPWI (259 aa)). ATP is bound by residues 69 to 77 (LGRGEFGIT) and K92. Residue D187 is the Proton acceptor of the active site. S227 carries the phosphoserine modification. The segment at 327–357 (APNVPLGDIVRSRLKQFSMMNRFKKKVLRVI) is autoinhibitory domain. EF-hand domains follow at residues 364–399 (QEVE…VGSQ), 400–435 (LGEP…LQKI), 436–471 (ENDE…ELGE), and 472–507 (PDAS…GTDW). Residues D377, D379, D381, K383, E388, D413, D415, N417, E424, D449, D451, S453, Y455, E460, D485, D487, D489, R491, and E496 each coordinate Ca(2+).

It belongs to the protein kinase superfamily. Ser/Thr protein kinase family. CDPK subfamily.

It is found in the membrane. It carries out the reaction L-seryl-[protein] + ATP = O-phospho-L-seryl-[protein] + ADP + H(+). The catalysed reaction is L-threonyl-[protein] + ATP = O-phospho-L-threonyl-[protein] + ADP + H(+). With respect to regulation, activated by calcium. Autophosphorylation may play an important role in the regulation of the kinase activity. Its function is as follows. May play a role in signal transduction pathways that involve calcium as a second messenger. May be a positive regulator controlling stress signal transduction. This is Calcium-dependent protein kinase 10 (CPK10) from Arabidopsis thaliana (Mouse-ear cress).